Here is a 273-residue protein sequence, read N- to C-terminus: Shikimate dehydrogenase (NADP(+)) (273 aa).

Shikimate is bound by residues 15–17 and Thr-62; that span reads SLS. The active-site Proton acceptor is the Lys-66. Glu-78 contacts NADP(+). Asn-87 and Asp-102 together coordinate shikimate. NADP(+)-binding positions include 126–130, 150–155, and Ile-217; these read GAGGA and NRTIEK. Shikimate is bound at residue Tyr-219. Position 240 (Gly-240) interacts with NADP(+).

This sequence belongs to the shikimate dehydrogenase family. As to quaternary structure, homodimer.

It carries out the reaction shikimate + NADP(+) = 3-dehydroshikimate + NADPH + H(+). The protein operates within metabolic intermediate biosynthesis; chorismate biosynthesis; chorismate from D-erythrose 4-phosphate and phosphoenolpyruvate: step 4/7. Involved in the biosynthesis of the chorismate, which leads to the biosynthesis of aromatic amino acids. Catalyzes the reversible NADPH linked reduction of 3-dehydroshikimate (DHSA) to yield shikimate (SA). The sequence is that of Shikimate dehydrogenase (NADP(+)) from Nitrosopumilus maritimus (strain SCM1).